The chain runs to 382 residues: Leucine carboxyl methyltransferase 1 (382 aa).

Positions 1–11 (MSAPQIPNLNT) are enriched in polar residues. The disordered stretch occupies residues 1–45 (MSAPQIPNLNTLRRGGGRGRFRARGGPDSSSSSGNKDRVVQGTDN). S-adenosyl-L-methionine contacts are provided by residues Arg-88, Gly-121, Asp-146, 193–194 (DL), and Glu-230.

This sequence belongs to the methyltransferase superfamily. LCMT family.

The enzyme catalyses [phosphatase 2A protein]-C-terminal L-leucine + S-adenosyl-L-methionine = [phosphatase 2A protein]-C-terminal L-leucine methyl ester + S-adenosyl-L-homocysteine. In terms of biological role, methylates the carboxyl group of the C-terminal leucine residue of protein phosphatase 2A catalytic subunits to form alpha-leucine ester residues. This Emericella nidulans (strain FGSC A4 / ATCC 38163 / CBS 112.46 / NRRL 194 / M139) (Aspergillus nidulans) protein is Leucine carboxyl methyltransferase 1 (ppm1).